The chain runs to 211 residues: Uracil phosphoribosyltransferase (211 aa).

5-phospho-alpha-D-ribose 1-diphosphate is bound by residues R78, R103, and 130–138 (DPMLATGGT). Uracil-binding positions include I195 and 200–202 (GDA). 5-phospho-alpha-D-ribose 1-diphosphate is bound at residue D201.

The protein belongs to the UPRTase family. The cofactor is Mg(2+).

The enzyme catalyses UMP + diphosphate = 5-phospho-alpha-D-ribose 1-diphosphate + uracil. It functions in the pathway pyrimidine metabolism; UMP biosynthesis via salvage pathway; UMP from uracil: step 1/1. With respect to regulation, allosterically activated by GTP. Functionally, catalyzes the conversion of uracil and 5-phospho-alpha-D-ribose 1-diphosphate (PRPP) to UMP and diphosphate. This chain is Uracil phosphoribosyltransferase, found in Streptomyces coelicolor (strain ATCC BAA-471 / A3(2) / M145).